A 190-amino-acid polypeptide reads, in one-letter code: MGKYYCDYCDVFLVSESPSVRKAHNSGRNHLTNVRDYYSSLGHDKAQSYIDEITRMFETGGGNSTSNRGPGGNPPGSQPGPPNAGMSGPMRPPFSNSTAGPNMPPLPPAMLALMNGQNGMSSPGSGPPPMRFAGPPIPNNMPPGMMQPPHVNGYSSGPLPPQPQPASGGQGAPPLTARMNPDRARQLGLI.

The Matrin-type zinc-finger motif lies at 4 to 36; it reads YYCDYCDVFLVSESPSVRKAHNSGRNHLTNVRD. Residues 57-190 form a disordered region; the sequence is FETGGGNSTS…PDRARQLGLI (134 aa). A compositionally biased stretch (pro residues) spans 72–82; the sequence is GNPPGSQPGPP. Low complexity predominate over residues 109-124; sequence AMLALMNGQNGMSSPG. Over residues 125 to 141 the composition is skewed to pro residues; sequence SGPPPMRFAGPPIPNNM. Residues 180–190 show a composition bias toward basic and acidic residues; it reads NPDRARQLGLI.

It belongs to the U1 small nuclear ribonucleoprotein C family. As to quaternary structure, U1 snRNP is composed of the 7 core Sm proteins B/B', D1, D2, D3, E, F and G that assemble in a heptameric protein ring on the Sm site of the small nuclear RNA to form the core snRNP, and at least 3 U1 snRNP-specific proteins U1-70K, U1-A and U1-C. U1-C interacts with U1 snRNA and the 5' splice-site region of the pre-mRNA.

Its subcellular location is the nucleus. In terms of biological role, component of the spliceosomal U1 snRNP, which is essential for recognition of the pre-mRNA 5' splice-site and the subsequent assembly of the spliceosome. U1-C is directly involved in initial 5' splice-site recognition for both constitutive and regulated alternative splicing. The interaction with the 5' splice-site seems to precede base-pairing between the pre-mRNA and the U1 snRNA. Stimulates commitment or early (E) complex formation by stabilizing the base pairing of the 5' end of the U1 snRNA and the 5' splice-site region. The protein is U1 small nuclear ribonucleoprotein C-1 of Puccinia graminis f. sp. tritici (strain CRL 75-36-700-3 / race SCCL) (Black stem rust fungus).